The chain runs to 425 residues: SWI5-dependent HO expression protein 3 (425 aa).

The segment at 24-45 is disordered; sequence NLESSPTKDRNTSSQNASSSRV. Positions 35–45 are enriched in polar residues; it reads TSSQNASSSRV. A coiled-coil region spans residues 68-197; it reads QNLLSKLELA…LELSNQNLNY (130 aa). The tract at residues 322-425 is disordered; it reads RKTPNTNDSS…NSMVVHGAQS (104 aa). Low complexity predominate over residues 326 to 338; that stretch reads NTNDSSSNGNSSN. Residue S343 is modified to Phosphoserine. 2 stretches are compositionally biased toward polar residues: residues 345 to 358 and 382 to 397; these read YTASPLLSSGSIPK and KTNVTHNNDPSTSPTI. At S394 the chain carries Phosphoserine.

The protein belongs to the SHE3 family. Interacts with SHE2 and MYO4.

The protein localises to the endoplasmic reticulum membrane. Its function is as follows. RNA-binding protein that binds specific mRNAs including the ASH1 mRNA, coding for a repressor of the HO endonuclease. Part of the mRNA localization machinery that restricts accumulation of certain proteins to the bud and in the daughter cell. Required for the delivery of cortical endoplasmic reticulum into the emerging bud. This chain is SWI5-dependent HO expression protein 3 (SHE3), found in Saccharomyces cerevisiae (strain ATCC 204508 / S288c) (Baker's yeast).